A 306-amino-acid chain; its full sequence is IN2-2 protein (306 aa).

The Proton donor role is filled by Tyr-64. Residue His-131 participates in substrate binding. 210-220 contacts NADP(+); the sequence is SPLGRGFFSSG. Positions 272-306 are disordered; sequence LGSPPRKRRLPHTWHNKNRQLQPERGGTVCEAYTG. The span at 276-289 shows a compositional bias: basic residues; that stretch reads PRKRRLPHTWHNKN.

Belongs to the aldo/keto reductase family. Aldo/keto reductase 2 subfamily. Leaves and roots.

The protein is IN2-2 protein (IN2-2) of Zea mays (Maize).